We begin with the raw amino-acid sequence, 239 residues long: Large ribosomal subunit protein mL67 (239 aa).

It belongs to the mitochondrion-specific ribosomal protein mL67 family. In terms of assembly, component of the mitochondrial large ribosomal subunit (mt-LSU).

It localises to the nucleus. Its subcellular location is the mitochondrion. In terms of biological role, component of the mitochondrial ribosome (mitoribosome), a dedicated translation machinery responsible for the synthesis of mitochondrial genome-encoded proteins, including at least some of the essential transmembrane subunits of the mitochondrial respiratory chain. The mitoribosomes are attached to the mitochondrial inner membrane and translation products are cotranslationally integrated into the membrane. mL67/MHR1 also has extraribosomal functions, being involved in regulation of mitochondrial DNA recombination, maintenance and repair, and generation of homoplasmic cells. mL67/MHR1 also acts as transcription factor involved in regulation of RNA polymerase II-dependent transcription. This is Large ribosomal subunit protein mL67 (MHR1) from Candida albicans (strain SC5314 / ATCC MYA-2876) (Yeast).